The primary structure comprises 427 residues: MTRSEELFKEALKVIPGGVNSPVRAFGSVGESPRFIKRAEGAHLYDVDGKEYIDYICSWGPMILGHNHPDILESVVQACQNGLSFGAVTEMEVKMAKLICELVPSIEMVRMVNSGTEAVMSAIRVARGYTGRNKIIKFNGCYHGHSDGLLVKAGSGVMTAGVPDSLGVPKGCTEDTLTANYNDITGVQELFNQYRSDIAAVIVEPVAANMGVVLPKEGFLHGLRKLCNENGTVLIFDEVITGFRLGIDGAQGYYGVTPDLTTYGKIIGAGMPVGAYGGRKEIMEVVAPLGAVYQAGTLSGNPVAMTAGYTQLTILKENPDYYTKLNQMGELLFGDIEMKFRRAGIPFQMNHVGSLGSLFFAKEEVYDYQSAKASDTEQYKAYFKYMLNKGIYLAPAQFEAMFLSVAHGEEEIKQTLDTMDGFLESVR.

An N6-(pyridoxal phosphate)lysine modification is found at Lys265.

Belongs to the class-III pyridoxal-phosphate-dependent aminotransferase family. HemL subfamily. In terms of assembly, homodimer. The cofactor is pyridoxal 5'-phosphate.

The protein resides in the cytoplasm. It carries out the reaction (S)-4-amino-5-oxopentanoate = 5-aminolevulinate. It functions in the pathway porphyrin-containing compound metabolism; protoporphyrin-IX biosynthesis; 5-aminolevulinate from L-glutamyl-tRNA(Glu): step 2/2. The polypeptide is Glutamate-1-semialdehyde 2,1-aminomutase 1 (Lachnoclostridium phytofermentans (strain ATCC 700394 / DSM 18823 / ISDg) (Clostridium phytofermentans)).